The sequence spans 378 residues: Cytochrome P450 monooxygenase pytD (378 aa).

Residue cysteine 321 coordinates heme.

It belongs to the cytochrome P450 family. It depends on heme as a cofactor.

Its pathway is secondary metabolite biosynthesis. Its function is as follows. Cytochrome P450 monooxygenase pytD; part of the gene cluster that mediates the biosynthesis of pyranterreones, a family of antioxidative compounds. The first step of pyranonigrins biosynthesis is performed by the hybrid PKS-NRPS synthetase pytA that condenses 4 malonyl-CoA units ato the acetyl starter unit by the modular PKS of pytA. The acyl chain is then connected to an L-serine through the amide bond by the modular NRPS of pytA. A tetramic acid is formed and released from the PKS-NRPS pytA to give pyranterreone 5 with the help of the thioesterase pytI. Pyranterreone 5 could be methylated by pytC to afford pyranterreone 6. Both pyranterreones 5 and 6 are subsequently oxidized by the FAD-linked oxidoreductase pytB and the cytochrome P450 monooxygenase pytD to form the fused gamma-pyrone core, resulting in pyranterreones 7 and 11, respectively. The hydroxy group at C-8 of pyranterreones 7 and 11 are dehydrated by the aspartyl protease pytH to form a delta-7 double bond to give pyranterreones 3 and 1, 2 accordingly. The exo-methylene of pyranterreone 3 could be reduced into a pendant methyl by reductase pytE to provide pyranterreone 4, also known as cordylactam. Pyranterreone 4 can be reconverted to pyranterreone 3 through pytB-catalyzed dehydrogenation or further oxidized to pyranterreones 9 and 10. The chain is Cytochrome P450 monooxygenase pytD from Aspergillus terreus (strain NIH 2624 / FGSC A1156).